Here is a 390-residue protein sequence, read N- to C-terminus: Levoglucosan dehydrogenase (390 aa).

10 residues coordinate NADH: Phe-13, Met-14, Glu-43, Thr-81, Asn-83, His-86, Glu-103, Lys-104, Ala-130, and Asn-132. Lys-104 provides a ligand contact to levoglucosan. Residues Tyr-133 and Gln-163 each coordinate levoglucosan. NADH contacts are provided by Trp-175 and Arg-176. Arg-176, Asp-189, and His-193 together coordinate levoglucosan. Tyr-335 is an NADH binding site.

It belongs to the Gfo/Idh/MocA family. As to quaternary structure, homotetramer.

The catalysed reaction is levoglucosan + NAD(+) = 3-dehydrolevoglucosan + NADH + H(+). Catalyzes the oxidation of levoglucosan (1,6-anhydro-beta-D-glucose, LG) to 3-dehydrolevoglucosan (3-keto-LG). Exhibits high substrate specificity toward levoglucosan and NAD(+) for the oxidative reaction. Exhibits weak activities (about 4% compared with that of LG) toward L-sorbose and 1,5-anhydro-D-glucitol, and activity toward D-xylose is also detectable (1.7%). Can also efficiently catalyzes the NADH-dependent reduction (reverse reaction) of 3-keto-LG. This chain is Levoglucosan dehydrogenase, found in Pseudarthrobacter phenanthrenivorans (strain DSM 18606 / JCM 16027 / LMG 23796 / Sphe3) (Arthrobacter phenanthrenivorans).